The chain runs to 326 residues: tRNA-modifying protein YgfZ (326 aa).

Trp27 and Trp189 together coordinate folate.

The protein belongs to the tRNA-modifying YgfZ family.

It is found in the cytoplasm. Folate-binding protein involved in regulating the level of ATP-DnaA and in the modification of some tRNAs. It is probably a key factor in regulatory networks that act via tRNA modification, such as initiation of chromosomal replication. The sequence is that of tRNA-modifying protein YgfZ from Salmonella paratyphi C (strain RKS4594).